A 469-amino-acid chain; its full sequence is Probable Xaa-Pro aminopeptidase PEPP (469 aa).

4 residues coordinate Mn(2+): aspartate 264, aspartate 275, glutamate 398, and glutamate 438.

The protein belongs to the peptidase M24B family. It depends on Mn(2+) as a cofactor.

It catalyses the reaction Release of any N-terminal amino acid, including proline, that is linked to proline, even from a dipeptide or tripeptide.. Functionally, catalyzes the removal of a penultimate prolyl residue from the N-termini of peptides. This chain is Probable Xaa-Pro aminopeptidase PEPP (PEPP), found in Ajellomyces capsulatus (strain G186AR / H82 / ATCC MYA-2454 / RMSCC 2432) (Darling's disease fungus).